The following is a 335-amino-acid chain: Mycobacterial beta-ketoacyl-[acyl-carrier-protein] synthase III (335 aa).

Active-site residues include cysteine 122 and histidine 258. The tract at residues 259–263 (QANSR) is ACP-binding. The active site involves asparagine 289.

This sequence belongs to the thiolase-like superfamily. FabH family. As to quaternary structure, homodimer.

The protein localises to the cytoplasm. It carries out the reaction malonyl-[ACP] + dodecanoyl-CoA + H(+) = 3-oxotetradecanoyl-[ACP] + CO2 + CoA. The protein operates within lipid metabolism; fatty acid biosynthesis. Its pathway is lipid metabolism; mycolic acid biosynthesis. Functionally, catalyzes the condensation reaction of fatty acid synthesis by the addition to an acyl acceptor of two carbons from malonyl-ACP. Catalyzes the first condensation reaction which initiates fatty acid synthesis and may therefore play a role in governing the total rate of fatty acid production. Possesses both acetoacetyl-ACP synthase and acetyl transacylase activities. Its substrate specificity determines the biosynthesis of branched-chain and/or straight-chain of fatty acids. In Mycobacterium avium (strain 104), this protein is Mycobacterial beta-ketoacyl-[acyl-carrier-protein] synthase III.